A 441-amino-acid polypeptide reads, in one-letter code: uncharacterized protein (441 aa).

The segment covering 121-143 has biased composition (low complexity); sequence TLSPSIVSEQQQQQQQQQQQQQQ. 2 disordered regions span residues 121 to 146 and 371 to 392; these read TLSPSIVSEQQQQQQQQQQQQQQAIS and SDADTDSDSEHPTSAPSTTAPN. Residues 382–391 show a composition bias toward polar residues; the sequence is PTSAPSTTAP.

This is an uncharacterized protein from Dictyostelium discoideum (Social amoeba).